Reading from the N-terminus, the 543-residue chain is Small conductance calcium-activated potassium channel protein 1 (543 aa).

A disordered region spans residues 1–92 (MNSHSYNGSV…SGKPSNVGHR (92 aa)). The span at 65 to 76 (DQDDDEDDEEDE) shows a compositional bias: acidic residues. A helical membrane pass occupies residues 111–131 (LIFGMFGIVVMVTETELSWGV). A helical transmembrane segment spans residues 140-160 (FALKCLISLSTAILLGLVVLY). The helical transmembrane segment at 179–199 (IAMTCERVFLISLELAVCAIH) threads the bilayer. A helical membrane pass occupies residues 228–248 (VLLSIPMFLRLYLLGRVMLLH). The helical transmembrane segment at 277–297 (LMTICPGTVLLVFSISSWIIA) threads the bilayer. The segment at residues 317-337 (FLGAMWLISITFLSIGYGDMV) is an intramembrane region (pore-forming). A helical transmembrane segment spans residues 346–366 (VCLLTGIMGAGCTALVVAVVA). The segment at 384-463 (DTQLTKRVKN…LTDLAKTQTV (80 aa)) is calmodulin-binding. A disordered region spans residues 505 to 543 (QAIRPPPPPLPPRPGPGPQDQAARSSPCRWTPVAPSDCG). Pro residues predominate over residues 508–521 (RPPPPPLPPRPGPG).

This sequence belongs to the potassium channel KCNN family. KCa2.1/KCNN1 subfamily. As to quaternary structure, homodimer. Heteromultimer with KCNN2 and KCNN3. The complex is composed of 4 channel subunits each of which binds to a calmodulin subunit which regulates the channel activity through calcium-binding. Interacts with calmodulin.

The protein localises to the membrane. The protein resides in the cytoplasm. Its subcellular location is the myofibril. It is found in the sarcomere. It localises to the z line. It carries out the reaction K(+)(in) = K(+)(out). Its activity is regulated as follows. Inhibited by bee venom neurotoxin apamin. Inhibited by d-tubocurarine and tetraethylammonium (TEA). Functionally, small conductance calcium-activated potassium channel that mediates the voltage-independent transmembrane transfer of potassium across the cell membrane through a constitutive interaction with calmodulin which binds the intracellular calcium allowing its opening. The current is characterized by a voltage-independent activation, an intracellular calcium concentration increase-dependent activation and a single-channel conductance of about 3 picosiemens. Also presents an inwardly rectifying current, thus reducing its already small outward conductance of potassium ions, which is particularly the case when the membrane potential displays positive values, above + 20 mV. Activation is followed by membrane hyperpolarization. Thought to regulate neuronal excitability by contributing to the slow component of synaptic afterhyperpolarization. The chain is Small conductance calcium-activated potassium channel protein 1 from Homo sapiens (Human).